Here is a 1146-residue protein sequence, read N- to C-terminus: Error-prone DNA polymerase (1146 aa).

Disordered stretches follow at residues Met-1–Lys-43 and Ala-154–Pro-178. The segment covering Glu-12–Pro-26 has biased composition (basic and acidic residues).

The protein belongs to the DNA polymerase type-C family. DnaE2 subfamily.

Its subcellular location is the cytoplasm. It catalyses the reaction DNA(n) + a 2'-deoxyribonucleoside 5'-triphosphate = DNA(n+1) + diphosphate. DNA polymerase involved in damage-induced mutagenesis and translesion synthesis (TLS). It is not the major replicative DNA polymerase. This Nocardia farcinica (strain IFM 10152) protein is Error-prone DNA polymerase.